The primary structure comprises 557 residues: Dihydroxy-acid dehydratase (557 aa).

C50 contacts [2Fe-2S] cluster. A Mg(2+)-binding site is contributed by D82. Position 123 (C123) interacts with [2Fe-2S] cluster. 2 residues coordinate Mg(2+): D124 and K125. K125 bears the N6-carboxylysine mark. C195 contributes to the [2Fe-2S] cluster binding site. A Mg(2+)-binding site is contributed by E447. Residue S473 is the Proton acceptor of the active site.

It belongs to the IlvD/Edd family. As to quaternary structure, homodimer. [2Fe-2S] cluster is required as a cofactor. Requires Mg(2+) as cofactor.

It carries out the reaction (2R)-2,3-dihydroxy-3-methylbutanoate = 3-methyl-2-oxobutanoate + H2O. It catalyses the reaction (2R,3R)-2,3-dihydroxy-3-methylpentanoate = (S)-3-methyl-2-oxopentanoate + H2O. Its pathway is amino-acid biosynthesis; L-isoleucine biosynthesis; L-isoleucine from 2-oxobutanoate: step 3/4. The protein operates within amino-acid biosynthesis; L-valine biosynthesis; L-valine from pyruvate: step 3/4. Functions in the biosynthesis of branched-chain amino acids. Catalyzes the dehydration of (2R,3R)-2,3-dihydroxy-3-methylpentanoate (2,3-dihydroxy-3-methylvalerate) into 2-oxo-3-methylpentanoate (2-oxo-3-methylvalerate) and of (2R)-2,3-dihydroxy-3-methylbutanoate (2,3-dihydroxyisovalerate) into 2-oxo-3-methylbutanoate (2-oxoisovalerate), the penultimate precursor to L-isoleucine and L-valine, respectively. The sequence is that of Dihydroxy-acid dehydratase from Burkholderia pseudomallei (strain 1710b).